A 328-amino-acid polypeptide reads, in one-letter code: GMP reductase (328 aa).

C176 acts as the Thioimidate intermediate in catalysis. Residue 205-228 (IIADGGIRTHGDIAKSIRFGASMI) coordinates NADP(+).

The protein belongs to the IMPDH/GMPR family. GuaC type 2 subfamily.

The catalysed reaction is IMP + NH4(+) + NADP(+) = GMP + NADPH + 2 H(+). Catalyzes the irreversible NADPH-dependent deamination of GMP to IMP. It functions in the conversion of nucleobase, nucleoside and nucleotide derivatives of G to A nucleotides, and in maintaining the intracellular balance of A and G nucleotides. The sequence is that of GMP reductase from Streptococcus pneumoniae (strain P1031).